The following is a 341-amino-acid chain: L-threonine 3-dehydrogenase (341 aa).

A Zn(2+)-binding site is contributed by Cys38. Active-site charge relay system residues include Thr40 and His43. Residues His63, Glu64, Cys93, Cys96, Cys99, and Cys107 each contribute to the Zn(2+) site. Residues Ile175, Asp195, Arg200, 262 to 264, and 286 to 287 each bind NAD(+); these read LGI and IY.

It belongs to the zinc-containing alcohol dehydrogenase family. As to quaternary structure, homotetramer. The cofactor is Zn(2+).

The protein localises to the cytoplasm. It catalyses the reaction L-threonine + NAD(+) = (2S)-2-amino-3-oxobutanoate + NADH + H(+). The protein operates within amino-acid degradation; L-threonine degradation via oxydo-reductase pathway; glycine from L-threonine: step 1/2. Its function is as follows. Catalyzes the NAD(+)-dependent oxidation of L-threonine to 2-amino-3-ketobutyrate. The polypeptide is L-threonine 3-dehydrogenase (Klebsiella pneumoniae subsp. pneumoniae (strain ATCC 700721 / MGH 78578)).